The following is a 138-amino-acid chain: ATP synthase epsilon chain (138 aa).

This sequence belongs to the ATPase epsilon chain family. In terms of assembly, F-type ATPases have 2 components, CF(1) - the catalytic core - and CF(0) - the membrane proton channel. CF(1) has five subunits: alpha(3), beta(3), gamma(1), delta(1), epsilon(1). CF(0) has three main subunits: a, b and c.

It is found in the cell inner membrane. Functionally, produces ATP from ADP in the presence of a proton gradient across the membrane. This Ruthia magnifica subsp. Calyptogena magnifica protein is ATP synthase epsilon chain.